We begin with the raw amino-acid sequence, 210 residues long: Protein-L-isoaspartate O-methyltransferase (210 aa).

Serine 54 is an active-site residue.

It belongs to the methyltransferase superfamily. L-isoaspartyl/D-aspartyl protein methyltransferase family.

The protein localises to the cytoplasm. The enzyme catalyses [protein]-L-isoaspartate + S-adenosyl-L-methionine = [protein]-L-isoaspartate alpha-methyl ester + S-adenosyl-L-homocysteine. Functionally, catalyzes the methyl esterification of L-isoaspartyl residues in peptides and proteins that result from spontaneous decomposition of normal L-aspartyl and L-asparaginyl residues. It plays a role in the repair and/or degradation of damaged proteins. In Methanothrix thermoacetophila (strain DSM 6194 / JCM 14653 / NBRC 101360 / PT) (Methanosaeta thermophila), this protein is Protein-L-isoaspartate O-methyltransferase.